The sequence spans 211 residues: MTFAIPDDLAPEVYPLAWLLGRWRGPGFLAYPDIPERPVVVETEFTHDGGPYLAYASTTWLLDGELAGLDRPFDPEALAAGQLWAAESGYWRPVVGGPRRSAFGVVQEGSDTRTEPGGAEPDPAGRRAPSTEVEVLLAEPSGHVSVFVGSVRGPRIDLATDLVARTSTAAEVTAATRMYGLVQGDLMWATDLAAFGHEMQSYSSGRLARMA.

The GXWXGXG signature appears at 21–27 (GRWRGPG). The interval 104–130 (GVVQEGSDTRTEPGGAEPDPAGRRAPS) is disordered.

The protein belongs to the nitrobindin family.

The protein is Ferric nitrobindin-like protein of Beutenbergia cavernae (strain ATCC BAA-8 / DSM 12333 / CCUG 43141 / JCM 11478 / NBRC 16432 / NCIMB 13614 / HKI 0122).